We begin with the raw amino-acid sequence, 421 residues long: tRNA(Ile)-lysidine synthase (421 aa).

26–31 (SGGADS) lines the ATP pocket.

It belongs to the tRNA(Ile)-lysidine synthase family.

Its subcellular location is the cytoplasm. It carries out the reaction cytidine(34) in tRNA(Ile2) + L-lysine + ATP = lysidine(34) in tRNA(Ile2) + AMP + diphosphate + H(+). Functionally, ligates lysine onto the cytidine present at position 34 of the AUA codon-specific tRNA(Ile) that contains the anticodon CAU, in an ATP-dependent manner. Cytidine is converted to lysidine, thus changing the amino acid specificity of the tRNA from methionine to isoleucine. In Streptococcus thermophilus (strain CNRZ 1066), this protein is tRNA(Ile)-lysidine synthase.